We begin with the raw amino-acid sequence, 127 residues long: Small ribosomal subunit protein bS6 (127 aa).

The tract at residues 104–127 (QGAEKGKSSRKEKVAAEAEASEEA) is disordered. The span at 107–119 (EKGKSSRKEKVAA) shows a compositional bias: basic and acidic residues.

This sequence belongs to the bacterial ribosomal protein bS6 family.

Binds together with bS18 to 16S ribosomal RNA. The chain is Small ribosomal subunit protein bS6 from Coxiella burnetii (strain CbuG_Q212) (Coxiella burnetii (strain Q212)).